The following is a 205-amino-acid chain: LexA repressor (205 aa).

The H-T-H motif DNA-binding region spans R28–K48. Catalysis depends on for autocatalytic cleavage activity residues S122 and K159.

It belongs to the peptidase S24 family. Homodimer.

The catalysed reaction is Hydrolysis of Ala-|-Gly bond in repressor LexA.. In terms of biological role, represses a number of genes involved in the response to DNA damage (SOS response), including recA and lexA. In the presence of single-stranded DNA, RecA interacts with LexA causing an autocatalytic cleavage which disrupts the DNA-binding part of LexA, leading to derepression of the SOS regulon and eventually DNA repair. The protein is LexA repressor of Shewanella loihica (strain ATCC BAA-1088 / PV-4).